A 154-amino-acid chain; its full sequence is Putative hydrogenase maturation protease MJ0253 (154 aa).

Belongs to the peptidase A31 family.

The chain is Putative hydrogenase maturation protease MJ0253 from Methanocaldococcus jannaschii (strain ATCC 43067 / DSM 2661 / JAL-1 / JCM 10045 / NBRC 100440) (Methanococcus jannaschii).